The chain runs to 304 residues: Acetyl-coenzyme A carboxylase carboxyl transferase subunit beta (304 aa).

The CoA carboxyltransferase N-terminal domain maps to 23–292; the sequence is VWTKCDSCGQ…PNPDAPREGE (270 aa). Residues cysteine 27, cysteine 30, cysteine 46, and cysteine 49 each coordinate Zn(2+). The C4-type zinc-finger motif lies at 27–49; sequence CDSCGQVLYRAELERNLEVCPKC. The disordered stretch occupies residues 281-304; sequence PAPNPDAPREGEVVPPVPDQEPEA. Positions 295-304 are enriched in pro residues; that stretch reads PPVPDQEPEA.

It belongs to the AccD/PCCB family. Acetyl-CoA carboxylase is a heterohexamer composed of biotin carboxyl carrier protein (AccB), biotin carboxylase (AccC) and two subunits each of ACCase subunit alpha (AccA) and ACCase subunit beta (AccD). Zn(2+) serves as cofactor.

It is found in the cytoplasm. The enzyme catalyses N(6)-carboxybiotinyl-L-lysyl-[protein] + acetyl-CoA = N(6)-biotinyl-L-lysyl-[protein] + malonyl-CoA. It participates in lipid metabolism; malonyl-CoA biosynthesis; malonyl-CoA from acetyl-CoA: step 1/1. Functionally, component of the acetyl coenzyme A carboxylase (ACC) complex. Biotin carboxylase (BC) catalyzes the carboxylation of biotin on its carrier protein (BCCP) and then the CO(2) group is transferred by the transcarboxylase to acetyl-CoA to form malonyl-CoA. This is Acetyl-coenzyme A carboxylase carboxyl transferase subunit beta from Citrobacter koseri (strain ATCC BAA-895 / CDC 4225-83 / SGSC4696).